Reading from the N-terminus, the 1135-residue chain is Retinoblastoma-like protein 2 (1135 aa).

Residues Met-1–Gln-43 are disordered. Ser-410 carries the post-translational modification Phosphoserine. Thr-414 is modified (phosphothreonine). The tract at residues Thr-414 to Val-613 is domain A. A pocket; binds E1A region spans residues Thr-414–Ala-1021. Ser-417 carries an O-linked (GlcNAc) serine glycan. Residues Pro-614–Ile-824 are spacer. The residue at position 636 (Ser-636) is a Phosphoserine. Thr-639 is subject to Phosphothreonine. Phosphoserine is present on residues Ser-659, Ser-669, Ser-684, Ser-942, Ser-946, Ser-960, Ser-965, and Ser-967. 4 stretches are compositionally biased toward polar residues: residues Thr-661 to Thr-674, Asp-683 to Gly-692, Ser-935 to Leu-950, and Asp-958 to Leu-969. Disordered regions lie at residues Thr-661–Pro-698 and Gly-930–Glu-994. Residues Arg-825 to Ala-1021 form a domain B region. A Phosphothreonine modification is found at Thr-968. Over residues Val-971–Pro-981 the composition is skewed to pro residues. A phosphoserine mark is found at Ser-975 and Ser-976. Phosphothreonine is present on Thr-980. 4 positions are modified to phosphoserine: Ser-1031, Ser-1064, Ser-1076, and Ser-1108.

It belongs to the retinoblastoma protein (RB) family. Interacts with AATF and RINT1. Component of the DREAM complex (also named LINC complex) at least composed of E2F4, E2F5, LIN9, LIN37, LIN52, LIN54, MYBL1, MYBL2, RBL1, RBL2, RBBP4, TFDP1 and TFDP2. The complex exists in quiescent cells where it represses cell cycle-dependent genes. It dissociates in S phase when LIN9, LIN37, LIN52 and LIN54 form a subcomplex that binds to MYBL2. Interacts with USP4. Interacts with KMT5B, KMT5C and USP4. Interacts with PML. Interacts with RBBP9. Interacts with CD53. In terms of processing, during G0 and early G1 phase of the cell cycle, phosphorylated on Ser-636 and on 5 sites within the domain B. Phosphorylation on Ser-669 in G1 leads to its ubiquitin-dependent proteolysis.

Its subcellular location is the nucleus. In terms of biological role, key regulator of entry into cell division. Directly involved in heterochromatin formation by maintaining overall chromatin structure and, in particular, that of constitutive heterochromatin by stabilizing histone methylation. Recruits and targets histone methyltransferases KMT5B and KMT5C, leading to epigenetic transcriptional repression. Controls histone H4 'Lys-20' trimethylation. Probably acts as a transcription repressor by recruiting chromatin-modifying enzymes to promoters. Potent inhibitor of E2F-mediated trans-activation, associates preferentially with E2F5. Binds to cyclins A and E. Binds to and may be involved in the transforming capacity of the adenovirus E1A protein. May act as a tumor suppressor. The protein is Retinoblastoma-like protein 2 (Rbl2) of Mus musculus (Mouse).